Here is a 262-residue protein sequence, read N- to C-terminus: MAYRSAPLYEDVIWRTHLQPQDPTLAQAVRATIAKHREHLLEFIRLDEPAPLNAMTLAQWSSPNVLSSLLAVYSDHIYRNQPMMIRENKPLISLWAQWYIGLMVPPLMLALLTQEKALDVSPEHFHAEFHETGRVACFWVDVCEDKNATPHSPQHRMETLISQALVPVVQALEATGEINGKLIWSNTGYLINWYLTEMKQLLGEATVESLRHALFFEKTLTNGEDNPLWRTVVLRDGLLVRRTCCQRYRLPDVQQCGDCTLK.

[2Fe-2S] cluster contacts are provided by C244, C245, C256, and C259.

In terms of assembly, monomer. It depends on [2Fe-2S] cluster as a cofactor.

It is found in the cytoplasm. The protein resides in the cell inner membrane. With respect to regulation, displays pH dependent redox properties. SufD is necessary for the stability of FhuF. Functionally, siderophore-iron reductase which is involved in iron removal from the hydroxamate-type siderophores coprogen, ferrichrome and ferrioxamine B after their transport into the cell. Binds both the iron-loaded and the apo forms of ferrichrome. The polypeptide is Ferric siderophore reductase (fhuF) (Escherichia coli (strain K12)).